Here is a 585-residue protein sequence, read N- to C-terminus: Pyruvate kinase (585 aa).

Arg-32 contacts substrate. 4 residues coordinate K(+): Asn-34, Ser-36, Asp-66, and Thr-67. ATP is bound at residue 34–37 (NFSH). ATP-binding residues include Arg-73 and Lys-156. A Mg(2+)-binding site is contributed by Glu-221. Residues Gly-244, Asp-245, and Thr-277 each contribute to the substrate site. Asp-245 serves as a coordination point for Mg(2+).

The protein belongs to the pyruvate kinase family. It in the C-terminal section; belongs to the PEP-utilizing enzyme family. It depends on Mg(2+) as a cofactor. K(+) serves as cofactor.

It catalyses the reaction pyruvate + ATP = phosphoenolpyruvate + ADP + H(+). Its pathway is carbohydrate degradation; glycolysis; pyruvate from D-glyceraldehyde 3-phosphate: step 5/5. This chain is Pyruvate kinase (pyk), found in Staphylococcus aureus (strain MRSA252).